The sequence spans 1261 residues: Structural maintenance of chromosomes protein 3 (1261 aa).

2 coiled-coil regions span residues 188–332 and 406–450; these read EKIQ…HSLQ and LIAD…YEMD. Residues 534–645 form the SMC hinge domain; it reads NGYYGTVIEL…IIVRTLDQAA (112 aa). 3 coiled-coil regions span residues 677-826, 857-930, and 1023-1085; these read KRSK…MDLM, NERR…DKIT, and RELE…ENRK. The DA-box signature appears at 1159–1193; sequence LSGGQKSLVALAIIFSIQKCDPAPFYLFDEIDAAL.

It belongs to the SMC family. SMC3 subfamily. In terms of assembly, component of the cohesin complex, composed of the smc-1 and smc-3 heterodimer attached via their SMC hinge domain, scc-1 which links them, and scc-3. Interacts with scc-1, smc-1 and tim-1.

It is found in the nucleus. The protein resides in the chromosome. Functionally, involved in chromosome cohesion during cell cycle and in DNA repair. Involved in the repair of double strand breaks during mitosis and meiosis. Required for chromosome segregation during mitosis. Central component of cohesin complex. The cohesin complex is required for the cohesion of sister chromatids after DNA replication. The cohesin complex apparently forms a large proteinaceous ring within which sister chromatids can be trapped. At anaphase, the complex is cleaved and dissociates from chromatin, allowing sister chromatids to segregate. Required for the localization of lab-1 to meiotic and mitotic chromosomes. The sequence is that of Structural maintenance of chromosomes protein 3 from Caenorhabditis elegans.